The primary structure comprises 100 residues: Integration host factor subunit alpha (100 aa).

This sequence belongs to the bacterial histone-like protein family. Heterodimer of an alpha and a beta chain.

In terms of biological role, this protein is one of the two subunits of integration host factor, a specific DNA-binding protein that functions in genetic recombination as well as in transcriptional and translational control. The chain is Integration host factor subunit alpha from Phenylobacterium zucineum (strain HLK1).